The chain runs to 146 residues: Holo-[acyl-carrier-protein] synthase (146 aa).

Positions 9 and 63 each coordinate Mg(2+).

The protein belongs to the P-Pant transferase superfamily. AcpS family. It depends on Mg(2+) as a cofactor.

Its subcellular location is the cytoplasm. The catalysed reaction is apo-[ACP] + CoA = holo-[ACP] + adenosine 3',5'-bisphosphate + H(+). Its function is as follows. Transfers the 4'-phosphopantetheine moiety from coenzyme A to a Ser of acyl-carrier-protein. The protein is Holo-[acyl-carrier-protein] synthase of Burkholderia ambifaria (strain ATCC BAA-244 / DSM 16087 / CCUG 44356 / LMG 19182 / AMMD) (Burkholderia cepacia (strain AMMD)).